A 483-amino-acid polypeptide reads, in one-letter code: MKVWFAATEATPFIKTGGLADVVGSLPLALAEEGAEVSVILPNYGQIKEQYKLEMEFLFDFIVPVGWRQQFGAVLRLKQDGVTFYFIDNEYYFKRDGVIYGHYDDAERFAYFSRAVLEMIQRVDAEEVPDVIHCHDWQTGVLPAFLRIHYQHLNRYQEIKTVFTIHNLQYQGVFPEEVLGDLLGLSHEHFTAEGIAHNGLVNYMKAGLVHANQITTVSPSYRDEIMDPYYGETLEPVLQHRAVDVRGILNGIDYRQFSPETDEHLVENYDVKTVEEGKAANKAALQQELGLPVNPDVPLFGFVSRLVDQKGIDLLAHILPDLFELDAQFIILGSGEAEYEGLFQHASTIRPDKVASYIGFDVGLAQRIYAGSDAFLMPSRFEPCGLSQLISMKYGSLPIVRETGGLRDTVQPFNQFTLEGNGFSFSNYNAQEFLDAIKRTIETYHDKPVFKHLIETAMQEDFSWIRSADEYLALYRLIAPSAD.

Position 15 (lysine 15) interacts with ADP-alpha-D-glucose.

Belongs to the glycosyltransferase 1 family. Bacterial/plant glycogen synthase subfamily.

The catalysed reaction is [(1-&gt;4)-alpha-D-glucosyl](n) + ADP-alpha-D-glucose = [(1-&gt;4)-alpha-D-glucosyl](n+1) + ADP + H(+). It functions in the pathway glycan biosynthesis; glycogen biosynthesis. In terms of biological role, synthesizes alpha-1,4-glucan chains using ADP-glucose. The chain is Glycogen synthase from Exiguobacterium sibiricum (strain DSM 17290 / CCUG 55495 / CIP 109462 / JCM 13490 / 255-15).